A 663-amino-acid polypeptide reads, in one-letter code: Oligopeptide-binding protein SarA (663 aa).

Residues 1–22 (MKKGKILALAGVALLATGVLAA) form the signal peptide. A lipid anchor (N-palmitoyl cysteine) is attached at Cys23. Cys23 carries the S-diacylglycerol cysteine lipid modification. Positions 637-663 (QKAQEKWNKERAESNKKAQEELEKHVK) are disordered.

Belongs to the bacterial solute-binding protein 5 family.

The protein resides in the cell membrane. In terms of biological role, may be involved in the expression of cell surface properties important for colonization of the human oral cavity. It may also be involved in uptake processes. The protein is Oligopeptide-binding protein SarA (sarA) of Streptococcus gordonii (strain Challis / ATCC 35105 / BCRC 15272 / CH1 / DL1 / V288).